The sequence spans 294 residues: Endonuclease G, mitochondrial (294 aa).

The N-terminal 44 residues, 1–44, are a transit peptide targeting the mitochondrion; that stretch reads MRALRAGLTLALGAGLGAAAEHWRRREGKAPGLLGRVPLLPVVA. Threonine 125 bears the Phosphothreonine mark. Histidine 138 serves as the catalytic Proton acceptor. Residue asparagine 169 coordinates Mg(2+). Residues 283 to 293 form an essential for deoxyribonuclease activity region; sequence AGNLKAITAGS.

The protein belongs to the DNA/RNA non-specific endonuclease family. Homodimer; disulfide-linked. Homodimerization is essential for its activity. Interacts with YWHAG. The cofactor is Mg(2+). Post-translationally, GSK3-beta-mediated phosphorylation at Thr-125 is necessary for its interaction with YWHAG and the induction of autophagy.

The protein resides in the mitochondrion. Functionally, endonuclease that preferentially catalyzes the cleavage of double-stranded 5-hydroxymethylcytosine (5hmC)-modified DNA. The 5hmC-modified nucleotide does not increase the binding affinity, but instead increases the efficiency of cutting and specifies the site of cleavage for the modified DNAs. Shows significantly higher affinity for four-stranded Holliday junction over duplex and single-stranded DNAs. Promotes conservative recombination when the DNA is 5hmC-modified. Promotes autophagy through the suppression of mTOR by its phosphorylation-mediated interaction with YWHAG and its endonuclease activity-mediated DNA damage response. GSK3-beta mediated phosphorylation of ENDOG enhances its interaction with YWHAG, leading to the release of TSC2 and PIK3C3 from YWHAG resulting in mTOR pathway suppression and autophagy initiation. Promotes cleavage of mtDNA in response to oxidative and nitrosative stress, in turn inducing compensatory mtDNA replication. The protein is Endonuclease G, mitochondrial (Endog) of Mus musculus (Mouse).